Here is a 443-residue protein sequence, read N- to C-terminus: Tol-Pal system protein TolB (443 aa).

The N-terminal stretch at 1 to 33 (MKIGIINTKIRTVFSAFACMIAASLVCTMPARA) is a signal peptide.

The protein belongs to the TolB family. The Tol-Pal system is composed of five core proteins: the inner membrane proteins TolA, TolQ and TolR, the periplasmic protein TolB and the outer membrane protein Pal. They form a network linking the inner and outer membranes and the peptidoglycan layer.

It localises to the periplasm. Part of the Tol-Pal system, which plays a role in outer membrane invagination during cell division and is important for maintaining outer membrane integrity. The polypeptide is Tol-Pal system protein TolB (Brucella suis biovar 1 (strain 1330)).